The chain runs to 648 residues: DNA helicase/primase complex-associated protein (648 aa).

Positions 43 to 63 (LWPSDQNNTASPAGAKTDQPT) are disordered.

It belongs to the herpesviridae HEPA family. Associates with the primase and the helicase to form the helicase-primase complex. Interacts with the origin-binding protein. Interacts with the polymerase catalytic subunit.

Its subcellular location is the host nucleus. Functionally, component of the helicase/primase complex. Unwinds the DNA at the replication forks and generates single-stranded DNA for both leading and lagging strand synthesis. The primase synthesizes short RNA primers on the lagging strand that the polymerase presumably elongates using dNTPs. The primase-associated factor has no known catalytic activity in the complex and may serve to facilitate the formation of the replisome by directly interacting with the origin-binding protein and the polymerase. The protein is DNA helicase/primase complex-associated protein (UL8) of Amazona oratrix (yellow-headed parrot).